A 109-amino-acid polypeptide reads, in one-letter code: Spermidine export protein MdtI (109 aa).

4 helical membrane-spanning segments follow: residues 6-26 (WVHA…NVFL), 36-56 (IFGL…SQAV), 64-84 (AYAL…WILF), and 88-108 (LNRK…MVKL).

Belongs to the drug/metabolite transporter (DMT) superfamily. Small multidrug resistance (SMR) (TC 2.A.7.1) family. MdtI subfamily. In terms of assembly, forms a complex with MdtJ.

The protein localises to the cell inner membrane. Its function is as follows. Catalyzes the excretion of spermidine. In Escherichia coli O139:H28 (strain E24377A / ETEC), this protein is Spermidine export protein MdtI.